A 151-amino-acid chain; its full sequence is Methylglyoxal synthase (151 aa).

Positions 6–151 (RTMPAHKHVA…DYDAYLAERT (146 aa)) constitute an MGS-like domain. Substrate is bound by residues histidine 19, lysine 23, 45–48 (TGTT), and 65–66 (SG). Aspartate 71 acts as the Proton donor/acceptor in catalysis. Position 98 (histidine 98) interacts with substrate.

This sequence belongs to the methylglyoxal synthase family.

The catalysed reaction is dihydroxyacetone phosphate = methylglyoxal + phosphate. In terms of biological role, catalyzes the formation of methylglyoxal from dihydroxyacetone phosphate. This chain is Methylglyoxal synthase, found in Vibrio campbellii (strain ATCC BAA-1116).